The sequence spans 538 residues: Putative cysteine ligase BshC (538 aa).

The stretch at 460-485 forms a coiled coil; it reads KINEQIELLERMLKRNIEKKHEVELN.

This sequence belongs to the BshC family.

In terms of biological role, involved in bacillithiol (BSH) biosynthesis. May catalyze the last step of the pathway, the addition of cysteine to glucosamine malate (GlcN-Mal) to generate BSH. This is Putative cysteine ligase BshC from Bacillus cereus (strain Q1).